The following is a 513-amino-acid chain: Sugar transport protein 7 (513 aa).

Over M1–Y26 the chain is Cytoplasmic. The next 12 helical transmembrane spans lie at V27–I47, G84–S104, I121–A141, I144–V164, G171–V191, L205–P225, L286–F306, Y324–V344, A351–L371, V387–L407, I427–L447, and F452–L472. Residues L473 to V513 are Cytoplasmic-facing.

It belongs to the major facilitator superfamily. Sugar transporter (TC 2.A.1.1) family.

The protein resides in the cell membrane. In terms of biological role, mediates an active uptake of hexoses, probably by sugar/hydrogen symport. The chain is Sugar transport protein 7 (STP7) from Arabidopsis thaliana (Mouse-ear cress).